The chain runs to 265 residues: Bidirectional sugar transporter NEC1 (265 aa).

The Extracellular portion of the chain corresponds to 1 to 8 (MAQLRADD). Residues 9–29 (LSFIFGLLGNIVSFMVFLAPV) form a helical membrane-spanning segment. In terms of domain architecture, MtN3/slv 1 spans 11–97 (FIFGLLGNIV…SLFLFYAPRK (87 aa)). The Cytoplasmic portion of the chain corresponds to 30 to 44 (PTFYKIYKRKSSEGY). Residues 45 to 65 (QAIPYMVALFSAGLLLYYAYL) traverse the membrane as a helical segment. At 66-71 (RKNAYL) the chain is on the extracellular side. The chain crosses the membrane as a helical span at residues 72-92 (IVSINGFGCAIELTYISLFLF). The Cytoplasmic portion of the chain corresponds to 93-103 (YAPRKSKIFTG). A helical membrane pass occupies residues 104-124 (WLMLLELGALGMVMPITYLLA). Over 125-130 (EGSHRV) the chain is Extracellular. A helical transmembrane segment spans residues 131–151 (MIVGWICAAINVAVFAAPLSI). Positions 132-216 (IVGWICAAIN…LLYFVYKDSK (85 aa)) constitute a MtN3/slv 2 domain. At 152–164 (MRQVIKTKSVEFM) the chain is on the cytoplasmic side. A helical membrane pass occupies residues 165–185 (PFTLSLFLTLCATMWFFYGFF). At 186-190 (KKDFY) the chain is on the extracellular side. The chain crosses the membrane as a helical span at residues 191–211 (IAFPNILGFLFGIVQMLLYFV). The Cytoplasmic portion of the chain corresponds to 212 to 265 (YKDSKRIDDEKSDPVREATKSKEGVEIIINIEDDNSDNALQSMEKDFSRLRTSK).

The protein belongs to the SWEET sugar transporter family. As to quaternary structure, forms homooligomers and/or heterooligomers. In terms of tissue distribution, highly expressed in nectary tissue and weakly in the stamen, especially in stomium cells and in the upper part of the filaments.

Its subcellular location is the cell membrane. Mediates both low-affinity uptake and efflux of sugar across the plasma membrane. Promotes the formation of phloem bundles in mid-veins. Probably involved in the development of stomium cells that control anther opening time. Required for pollen viability. The sequence is that of Bidirectional sugar transporter NEC1 (NEC1) from Petunia hybrida (Petunia).